The chain runs to 78 residues: Magnetosome protein MamL (78 aa).

A signal peptide spans 1–22 (MVRVIGSLVFGGLILLLASSNA). The Lumenal portion of the chain corresponds to 23 to 38 (HMVETRFGPLIMLAPH). The helical transmembrane segment at 39 to 59 (FVVLGITFFLGFAIGIVLVFA) threads the bilayer. Over 60 to 78 (NVMKRRKHKLPGKNIVIKR) the chain is Cytoplasmic.

The protein belongs to the magnetosome MamL family.

The protein resides in the magnetosome membrane. Functionally, involved in magnetite crystal maturation, but not in magnetosome vesicle tubulation or formation. One of 7 genes (mamLQBIEMO) able to induce magnetosome membrane biogenesis; coexpression of mamLQRBIEMO in a deletion of the 17 gene mamAB operon restores magnetosome vesicle formation but not magnetite biosynthesis. The sequence is that of Magnetosome protein MamL from Magnetospirillum gryphiswaldense (strain DSM 6361 / JCM 21280 / NBRC 15271 / MSR-1).